Reading from the N-terminus, the 187-residue chain is Casparian strip membrane protein 5 (187 aa).

The Cytoplasmic portion of the chain corresponds to 1 to 24; sequence MKSGQAEIMETSKGIQKSGLMSRR. The helical transmembrane segment at 25 to 45 threads the bilayer; the sequence is IAILEFILRIVAFFNTIGSAI. Over 46-74 the chain is Extracellular; that stretch reads LMGTTHETLPFFTQFIRFQAEYNDLPALT. Residues 75–95 traverse the membrane as a helical segment; sequence FFVVANAVVSGYLILSLTLAF. Over 96 to 107 the chain is Cytoplasmic; that stretch reads VHIVKRKTQNTR. Residues 108–128 traverse the membrane as a helical segment; sequence ILLIILDVAMLGLLTSGASSA. At 129–161 the chain is on the extracellular side; sequence AAIVYLAHNGNNKTNWFAICQQFNSFCERISGS. Asparagine 140 carries N-linked (GlcNAc...) asparagine glycosylation. The helical transmembrane segment at 162 to 182 threads the bilayer; that stretch reads LIGSFIAIVLLILLILLSAIA. Over 183-187 the chain is Cytoplasmic; it reads LSRRH.

The protein belongs to the Casparian strip membrane proteins (CASP) family. As to quaternary structure, homodimer and heterodimers with other CASP proteins. Interacts with CASP1, CASP3 and CASP4.

Its subcellular location is the cell membrane. Regulates membrane-cell wall junctions and localized cell wall deposition. Required for establishment of the Casparian strip membrane domain (CSD) and the subsequent formation of Casparian strips, a cell wall modification of the root endodermis that determines an apoplastic barrier between the intraorganismal apoplasm and the extraorganismal apoplasm and prevents lateral diffusion. In Arabidopsis thaliana (Mouse-ear cress), this protein is Casparian strip membrane protein 5 (CASP5).